The primary structure comprises 113 residues: Ribonuclease P protein component (113 aa).

The protein belongs to the RnpA family. As to quaternary structure, consists of a catalytic RNA component (M1 or rnpB) and a protein subunit.

The enzyme catalyses Endonucleolytic cleavage of RNA, removing 5'-extranucleotides from tRNA precursor.. Functionally, RNaseP catalyzes the removal of the 5'-leader sequence from pre-tRNA to produce the mature 5'-terminus. It can also cleave other RNA substrates such as 4.5S RNA. The protein component plays an auxiliary but essential role in vivo by binding to the 5'-leader sequence and broadening the substrate specificity of the ribozyme. The polypeptide is Ribonuclease P protein component (Desulforamulus reducens (strain ATCC BAA-1160 / DSM 100696 / MI-1) (Desulfotomaculum reducens)).